The sequence spans 422 residues: Cytokine receptor-like factor 1 (422 aa).

The N-terminal stretch at 1-37 (MPAGRRGPAAQSARRPPPLLPLLLLLCVLGAPRAGSG) is a signal peptide. The Ig-like C2-type domain maps to 38–131 (AHTAVISPQD…SILAGSCLYV (94 aa)). 3 N-linked (GlcNAc...) asparagine glycosylation sites follow: Asn92, Asn104, and Asn140. Fibronectin type-III domains are found at residues 137 to 232 (KPVN…ILDV) and 237 to 341 (PPPD…TPRS). Cys143 and Cys153 form a disulfide bridge. Asn168 carries N-linked (GlcNAc...) asparagine glycosylation. A disulfide bond links Cys184 and Cys195. A Phosphoserine modification is found at Ser219. Residue Asn292 is glycosylated (N-linked (GlcNAc...) asparagine). Residues 327–331 (WSEWS) carry the WSXWS motif motif. A disordered region spans residues 332–363 (HPTAASTPRSERPGPGGGACEPRGGEPSSGPV). A glycan (N-linked (GlcNAc...) asparagine) is linked at Asn382. Positions 399–422 (HKTRNQDEGILPSGRRGTARGPAR) are disordered.

It belongs to the type I cytokine receptor family. Type 3 subfamily. Forms covalent di- and tetramers. Forms a heteromeric complex with cardiotrophin-like cytokine CLCF1/CLC; the CRLF1-CLCF1 complex is a ligand for the ciliary neurotrophic factor receptor/CNTFR. The CRLF1-CLCF1 heterodimer binds SORL1 (via N-terminal ectodomain); within this complex, the interaction is mediated predominantly by the CRLF1 moiety. The tripartite signaling complex formed by CRLF1, CLCF1 and CNTFR also binds SORL1. In terms of tissue distribution, highest levels of expression observed in spleen, thymus, lymph node, appendix, bone marrow, stomach, placenta, heart, thyroid and ovary. Strongly expressed also in fetal lung.

The protein localises to the secreted. In terms of biological role, in complex with CLCF1, forms a heterodimeric neurotropic cytokine that plays a crucial role during neuronal development. May also play a regulatory role in the immune system. The polypeptide is Cytokine receptor-like factor 1 (CRLF1) (Homo sapiens (Human)).